Consider the following 151-residue polypeptide: UPF0178 protein Spea_2958 (151 aa).

Belongs to the UPF0178 family.

This chain is UPF0178 protein Spea_2958, found in Shewanella pealeana (strain ATCC 700345 / ANG-SQ1).